The sequence spans 154 residues: Myoglobin (154 aa).

Residues 1–147 enclose the Globin domain; it reads MADVKKNCLA…FNDECQHQLA (147 aa). Histidine 96 lines the heme b pocket.

The protein belongs to the globin family.

The protein resides in the cytoplasm. This chain is Myoglobin (GLBB), found in Nippostrongylus brasiliensis (Rat hookworm).